We begin with the raw amino-acid sequence, 314 residues long: Olfactory receptor 51I1 (314 aa).

Over 1 to 27 the chain is Extracellular; it reads MLGLNGTPFQPATLQLTGIPGIQTGLT. The helical transmembrane segment at 28–48 threads the bilayer; it reads WVALIFCILYMISIVGNLSIL. Over 49–56 the chain is Cytoplasmic; that stretch reads TLVFWEPA. A helical transmembrane segment spans residues 57–77; the sequence is LHQPMYYFLSMLALNDLGVSF. Topologically, residues 78–101 are extracellular; the sequence is STLPTVISTFCFNYNHVAFNACLV. A disulfide bond links cysteine 99 and cysteine 191. The chain crosses the membrane as a helical span at residues 102 to 122; the sequence is QMFFIHTFSFMESGILLAMSL. Over 123-141 the chain is Cytoplasmic; it reads DRFVAICYPLRYVTVLTHN. The chain crosses the membrane as a helical span at residues 142-162; that stretch reads RILAMGLGILTKSFTTLFPFP. Topologically, residues 163-198 are extracellular; it reads FVVKRLPFCKGNVLHHSYCLHPDLMKVACGDIHVNN. Residues 199 to 219 form a helical membrane-spanning segment; sequence IYGLLVIIFTYGMDSTFILLS. The Cytoplasmic portion of the chain corresponds to 220–239; that stretch reads YALILRAMLVIISQEQRLKA. Residues 240 to 260 form a helical membrane-spanning segment; sequence LNTCMSHICAVLAFYVPIIAV. Over 261 to 275 the chain is Extracellular; the sequence is SMIHRFWKSAPPVVH. A helical transmembrane segment spans residues 276–296; it reads VMMSNVYLFVPPMLNPIIYSV. The Cytoplasmic segment spans residues 297 to 314; the sequence is KTKEIRKGILKFFHKSQA.

The protein belongs to the G-protein coupled receptor 1 family.

It localises to the cell membrane. Functionally, odorant receptor. This is Olfactory receptor 51I1 (OR51I1) from Homo sapiens (Human).